Here is a 1213-residue protein sequence, read N- to C-terminus: MDPPAGAARRLLCPALLLLLLPPPPLLLLPPPPASVRLVAATEPPGGPPGQGAERILAVPVRTDAQGRLVSHVVSLETAGAGVRARRAALDQTSGLPGGAAQDPGGRLFYNLTVFGRDLHLRLRPNARLVAPGATVEWQGETGDTRVEPLLGSCLYVGDVADLPKASSVALSNCDGLAGLIRMEEEEFFIEPLEKGQTDQEAEQGRVHVVYRRPPTPKPPPVSEPQALDTGVSQGNLDSLSRALGVLEERINSSRRRVRRHATDDDYNIEVLLGVDDSVVQFHGKEHVQKYLLTLMNIVNEIYHDESLGAHINVVLVRIILLSHAKSMSLIEIGNPSQSLENVCRWAYLQQKPDTDHDEYHDHAIFLTRQDFGPSGMQGYAPVTGMCHPVRSCTLNHEDGFSSAFVVAHETGHVLGMEHDGQGNRCGDEVRLGSIMAPLVQAAFHRFHWSRCSQQELSRYLHSYDCLRDDPFAHDWPALPQLPGLHYSMNEQCRFDFGLGYMMCTAFRTFDPCKQLWCSHPDNPYFCKTKKGPPLDGTMCAPGKHCFKGHCIWLTPDILKRDGNWGAWTPFGSCSRTCGTGVKFRTRQCDNPHPANGGRTCSGLAYDFQLCNPQDCPNSLADFREEQCQQWDLYFEHGDVQHHWLPHEHRDAKERCHLYCESKETGEVVSMKRMVHDGTRCSYKDAFSLCVRGDCRKVGCDGVIGSRKQEDKCGVCGGDNTHCKVVKGTFTRSPRKQDYIKMFEIPAGARHLLIQEADTTSHHLSVKNLETGKFILNEENHLDPNSRSFIAMGVEWEYRNEDERETLQTIGPLHGTITVLVIPEGDTRISLTYKYMIHEDSLNVDDNNVLEDDAVRHEWALKKWSPCSKPCGGGSQFTKYGCRRRLDSKMVHRAFCSALAKPKAIRRACNPQECSQPVWVTGEWEPCTQSCGRTGMQVRSVRCIQPLHNNTTRSVHTKHCNDHRPESRRACNRELCPGRWRAGSWSQCSVTCGNGTQERPVLCRTADDNFGVCREERPETARICRLAPCPRNGSDPSKKSYVVQWLSRPDPDSPIQKISSKDQCQGDKSMFCRMEVLSRYCSIPSYNKLCCKSCNPPRNLSNTEDGGVEPPPGKHNDIDVFMPTLPGPTVATQVQPSPGPPLEAPLNVSSTNATEDHPETNAVDVPYKIHGVDEEVPSPNLIPRRPSLYVKTRNQRIQELINAVQRKEKPGKF.

The signal sequence occupies residues 1-28 (MDPPAGAARRLLCPALLLLLLPPPPLLL). The propeptide occupies 29–260 (LPPPPASVRL…INSSRRRVRR (232 aa)). N-linked (GlcNAc...) asparagine glycosylation is present at asparagine 111. The segment at 211 to 232 (YRRPPTPKPPPVSEPQALDTGV) is disordered. Over residues 214–223 (PPTPKPPPVS) the composition is skewed to pro residues. A glycan (N-linked (GlcNAc...) asparagine) is linked at asparagine 252. Residues 267-471 (YNIEVLLGVD…HSYDCLRDDP (205 aa)) enclose the Peptidase M12B domain. Disulfide bonds link cysteine 344/cysteine 393, cysteine 387/cysteine 466, cysteine 426/cysteine 452, cysteine 493/cysteine 518, cysteine 504/cysteine 527, cysteine 513/cysteine 546, cysteine 540/cysteine 551, cysteine 574/cysteine 611, cysteine 578/cysteine 616, and cysteine 589/cysteine 601. Histidine 409 contributes to the Zn(2+) binding site. Glutamate 410 is a catalytic residue. Residues histidine 413 and histidine 419 each contribute to the Zn(2+) site. Positions 480 to 560 (PQLPGLHYSM…CIWLTPDILK (81 aa)) constitute a Disintegrin domain. Residues 561-617 (RDGNWGAWTPFGSCSRTCGTGVKFRTRQCDNPHPANGGRTCSGLAYDFQLCNPQDCP) enclose the TSP type-1 1 domain. A Cell attachment site motif is present at residues 692 to 694 (RGD). The spacer stretch occupies residues 723 to 851 (CKVVKGTFTR…LNVDDNNVLE (129 aa)). 3 TSP type-1 domains span residues 855-913 (VRHE…NPQE), 915-975 (SQPV…NREL), and 976-1030 (CPGR…APCP). N-linked (GlcNAc...) asparagine glycosylation is found at asparagine 949, asparagine 950, and asparagine 994. Disulfide bonds link cysteine 988–cysteine 1024, cysteine 992–cysteine 1029, and cysteine 1003–cysteine 1013. Residue asparagine 1032 is glycosylated (N-linked (GlcNAc...) asparagine). One can recognise a PLAC domain in the interval 1060–1098 (SKDQCQGDKSMFCRMEVLSRYCSIPSYNKLCCKSCNPPR). N-linked (GlcNAc...) asparagine glycans are attached at residues asparagine 1099, asparagine 1147, and asparagine 1152.

May belong to a multimeric complex. Binds specifically to collagen type XIV. Zn(2+) is required as a cofactor. Post-translationally, the precursor is cleaved by a furin endopeptidase. In terms of processing, glycosylated. Can be O-fucosylated by POFUT2 on a serine or a threonine residue found within the consensus sequence C1-X(2)-(S/T)-C2-G of the TSP type-1 repeat domains where C1 and C2 are the first and second cysteine residue of the repeat, respectively. Fucosylated repeats can then be further glycosylated by the addition of a beta-1,3-glucose residue by the glucosyltransferase, B3GALTL. Fucosylation mediates the efficient secretion of ADAMTS family members. Can also be C-glycosylated with one or two mannose molecules on tryptophan residues within the consensus sequence W-X-X-W of the TPRs, and N-glycosylated. These other glycosylations can also facilitate secretion.

It is found in the secreted. The protein localises to the extracellular space. The protein resides in the extracellular matrix. The enzyme catalyses Cleaves the N-propeptide of collagen chain alpha1(I) at Pro-|-Gln and of alpha1(II) and alpha2(I) at Ala-|-Gln.. Functionally, cleaves the propeptides of type I and II collagen prior to fibril assembly. Does not act on type III collagen. Cleaves lysyl oxidase LOX at a site downstream of its propeptide cleavage site to produce a short LOX form with reduced collagen-binding activity. The polypeptide is A disintegrin and metalloproteinase with thrombospondin motifs 2 (Adamts2) (Mus musculus (Mouse)).